The chain runs to 398 residues: Probable aminomethyltransferase (398 aa).

It belongs to the GcvT family. In terms of assembly, the glycine cleavage system is composed of four proteins: P, T, L and H.

It carries out the reaction N(6)-[(R)-S(8)-aminomethyldihydrolipoyl]-L-lysyl-[protein] + (6S)-5,6,7,8-tetrahydrofolate = N(6)-[(R)-dihydrolipoyl]-L-lysyl-[protein] + (6R)-5,10-methylene-5,6,7,8-tetrahydrofolate + NH4(+). In terms of biological role, the glycine cleavage system catalyzes the degradation of glycine. The chain is Probable aminomethyltransferase from Pyrococcus furiosus (strain ATCC 43587 / DSM 3638 / JCM 8422 / Vc1).